We begin with the raw amino-acid sequence, 55 residues long: MAKPASIKIRLNSTADTGFFYVTKKNARTKTEKMVLKKYDPVIRKHVEFREGKIK.

The protein belongs to the bacterial ribosomal protein bL33 family.

This Caulobacter vibrioides (strain ATCC 19089 / CIP 103742 / CB 15) (Caulobacter crescentus) protein is Large ribosomal subunit protein bL33.